A 199-amino-acid polypeptide reads, in one-letter code: Pneumococcal vaccine antigen A homolog (199 aa).

The protein localises to the cell surface. This is Pneumococcal vaccine antigen A homolog (pvaA) from Streptococcus pyogenes serotype M18 (strain MGAS8232).